A 113-amino-acid polypeptide reads, in one-letter code: Ribulose bisphosphate carboxylase small subunit (113 aa).

Belongs to the RuBisCO small chain family. Heterohexadecamer of 8 large and 8 small subunits. RuBisCO interacts with the C-terminus of CcmM, and can be found in complexes that also include carbonic anhydrase (ccaA).

Its subcellular location is the carboxysome. RuBisCO catalyzes two reactions: the carboxylation of D-ribulose 1,5-bisphosphate, the primary event in carbon dioxide fixation, as well as the oxidative fragmentation of the pentose substrate in the photorespiration process. Both reactions occur simultaneously and in competition at the same active site. Although the small subunit is not catalytic it is essential for maximal activity. The sequence is that of Ribulose bisphosphate carboxylase small subunit from Synechocystis sp. (strain ATCC 27184 / PCC 6803 / Kazusa).